The sequence spans 190 residues: Putative manganese efflux pump MntP (190 aa).

6 consecutive transmembrane segments (helical) span residues 3-23 (PISLLFLALAMSTDAFAAALG), 41-61 (LIFGAIETITPVIGWGIGQVA), 69-89 (DHWIAFTLLLVLGLHMIYNGL), 105-125 (FWILAVTAFATSIDALAVGVG), 133-153 (IMVAALAIGLATTVMVTIGVM), and 168-188 (IVGGIVLIVVGTTILYEHLTA).

It belongs to the MntP (TC 9.B.29) family.

It localises to the cell inner membrane. In terms of biological role, probably functions as a manganese efflux pump. The polypeptide is Putative manganese efflux pump MntP (Pseudomonas syringae pv. tomato (strain ATCC BAA-871 / DC3000)).